Reading from the N-terminus, the 382-residue chain is Mannitol-1-phosphate 5-dehydrogenase (382 aa).

An NAD(+)-binding site is contributed by alanine 3–glycine 14. N6-acetyllysine is present on lysine 269.

Belongs to the mannitol dehydrogenase family.

It carries out the reaction D-mannitol 1-phosphate + NAD(+) = beta-D-fructose 6-phosphate + NADH + H(+). The chain is Mannitol-1-phosphate 5-dehydrogenase from Escherichia coli (strain ATCC 8739 / DSM 1576 / NBRC 3972 / NCIMB 8545 / WDCM 00012 / Crooks).